Consider the following 308-residue polypeptide: 4-hydroxyproline 2-epimerase (308 aa).

Catalysis depends on C88, which acts as the Proton acceptor. Substrate contacts are provided by residues 89–90 (GH), H208, and D232. The active-site Proton donor is C236. 237–238 (GT) provides a ligand contact to substrate.

The protein belongs to the proline racemase family.

It catalyses the reaction trans-4-hydroxy-L-proline = cis-4-hydroxy-D-proline. In terms of biological role, catalyzes the reversible epimerization of cis-4-hydroxy-D-proline (c4DHyp) to trans-4-hydroxy-L-proline (t4LHyp). May be involved in a degradation pathway that allows P.putida strain KT2440 to grow on either epimer of 4-hydroxyproline, c4DHyp and t4LHyp, as the sole carbon and nitrogen source. Does not exhibit measureable racemase activity in vitro with any of the 19 natural chiral amino acid enantiomers. The protein is 4-hydroxyproline 2-epimerase of Pseudomonas putida (strain ATCC 47054 / DSM 6125 / CFBP 8728 / NCIMB 11950 / KT2440).